Reading from the N-terminus, the 605-residue chain is Insulin-like growth factor-binding protein complex acid labile subunit (605 aa).

Residues 1-27 (MALRKGGLALALLLLSWVALGPRSLEG) form the signal peptide. The LRRNT domain maps to 32–74 (TPGEAEGPACPATCACSYDDEVNELSVFCSSRNLTRLPDGIPG). Cystine bridges form between C41/C47 and C45/C60. N64, N85, and N96 each carry an N-linked (GlcNAc...) asparagine glycan. 19 LRR repeats span residues 75 to 96 (GTQA…AFRN), 99 to 120 (SLAF…ALLG), 123 to 144 (NLCH…TFAY), 147 to 168 (ALAL…LFEG), 171 to 192 (NLWD…AFRG), 195 to 216 (GLRE…LFSG), 219 to 240 (ELRE…VFAQ), 243 to 264 (RLQK…AFLG), 267 to 288 (ALRW…TFPG), 291 to 312 (GLRV…TFED), 315 to 336 (FLEE…SFEG), 339 to 360 (QLEV…AFLG), 363 to 384 (NVAV…VFRG), 387 to 408 (KLHS…TFAG), 411 to 432 (GLRR…SLWG), 435 to 456 (ELLE…LFQG), 459 to 480 (KLEY…ALGP), 483 to 504 (RAFW…LLAS), and 507 to 528 (RLRY…PPGL). N-linked (GlcNAc...) asparagine glycosylation is present at N368. N515 carries N-linked (GlcNAc...) asparagine glycosylation. Positions 536–605 (NPWDCSCPLK…DLGEAHFAPC (70 aa)) constitute an LRRCT domain. 3 disulfides stabilise this stretch: C540/C583, C542/C605, and C566/C571. A glycan (N-linked (GlcNAc...) asparagine) is linked at N580.

Forms a ternary complex with IGF1 and IGFBP3.

Its subcellular location is the secreted. The protein localises to the extracellular space. In terms of biological role, involved in protein-protein interactions that result in protein complexes, receptor-ligand binding or cell adhesion. This chain is Insulin-like growth factor-binding protein complex acid labile subunit (IGFALS), found in Papio hamadryas (Hamadryas baboon).